The sequence spans 155 residues: Protein-export protein SecB (155 aa).

This sequence belongs to the SecB family. As to quaternary structure, homotetramer, a dimer of dimers. One homotetramer interacts with 1 SecA dimer.

It is found in the cytoplasm. In terms of biological role, one of the proteins required for the normal export of preproteins out of the cell cytoplasm. It is a molecular chaperone that binds to a subset of precursor proteins, maintaining them in a translocation-competent state. It also specifically binds to its receptor SecA. The polypeptide is Protein-export protein SecB (Psychromonas ingrahamii (strain DSM 17664 / CCUG 51855 / 37)).